A 400-amino-acid chain; its full sequence is Dihydrolipoyllysine-residue succinyltransferase component of 2-oxoglutarate dehydrogenase complex (400 aa).

In terms of domain architecture, Lipoyl-binding spans 2–77; sequence GVKIIVPSLG…AVGEEIGDIN (76 aa). Position 43 is an N6-lipoyllysine (Lys-43). Residues 85-97 are compositionally biased toward polar residues; that stretch reads NSNEAAKPQTASQ. Residues 85–113 form a disordered region; that stretch reads NSNEAAKPQTASQPVPEKVPKKPAVANNT. A Peripheral subunit-binding (PSBD) domain is found at 113–150; sequence TLAPSVQKLVTENKLDPNNIKGTGKDGRITKGDVLETM. Active-site residues include His-371 and Asp-375.

The protein belongs to the 2-oxoacid dehydrogenase family. As to quaternary structure, forms a 24-polypeptide structural core with octahedral symmetry. Part of the 2-oxoglutarate dehydrogenase (OGDH) complex composed of E1 (2-oxoglutarate dehydrogenase), E2 (dihydrolipoamide succinyltransferase) and E3 (dihydrolipoamide dehydrogenase); the complex contains multiple copies of the three enzymatic components (E1, E2 and E3). The cofactor is (R)-lipoate.

The enzyme catalyses N(6)-[(R)-dihydrolipoyl]-L-lysyl-[protein] + succinyl-CoA = N(6)-[(R)-S(8)-succinyldihydrolipoyl]-L-lysyl-[protein] + CoA. It participates in amino-acid degradation; L-lysine degradation via saccharopine pathway; glutaryl-CoA from L-lysine: step 6/6. In terms of biological role, E2 component of the 2-oxoglutarate dehydrogenase (OGDH) complex which catalyzes the second step in the conversion of 2-oxoglutarate to succinyl-CoA and CO(2). The polypeptide is Dihydrolipoyllysine-residue succinyltransferase component of 2-oxoglutarate dehydrogenase complex (sucB) (Rickettsia bellii (strain RML369-C)).